A 273-amino-acid polypeptide reads, in one-letter code: 4-hydroxy-tetrahydrodipicolinate reductase (273 aa).

NAD(+) contacts are provided by residues 12–17 and Glu38; that span reads GAGGRM. Arg39 contacts NADP(+). NAD(+) contacts are provided by residues 102-104 and 126-129; these read GTT and AANF. The Proton donor/acceptor role is filled by His159. His160 serves as a coordination point for (S)-2,3,4,5-tetrahydrodipicolinate. The active-site Proton donor is the Lys163. 169–170 is a binding site for (S)-2,3,4,5-tetrahydrodipicolinate; the sequence is GT.

Belongs to the DapB family. Homotetramer.

It is found in the cytoplasm. The catalysed reaction is (S)-2,3,4,5-tetrahydrodipicolinate + NAD(+) + H2O = (2S,4S)-4-hydroxy-2,3,4,5-tetrahydrodipicolinate + NADH + H(+). The enzyme catalyses (S)-2,3,4,5-tetrahydrodipicolinate + NADP(+) + H2O = (2S,4S)-4-hydroxy-2,3,4,5-tetrahydrodipicolinate + NADPH + H(+). It functions in the pathway amino-acid biosynthesis; L-lysine biosynthesis via DAP pathway; (S)-tetrahydrodipicolinate from L-aspartate: step 4/4. In terms of biological role, catalyzes the conversion of 4-hydroxy-tetrahydrodipicolinate (HTPA) to tetrahydrodipicolinate. The polypeptide is 4-hydroxy-tetrahydrodipicolinate reductase (Salmonella agona (strain SL483)).